A 564-amino-acid chain; its full sequence is MMMTKQKNTLAERLNIGDEVRELKLGSTFNPKNTSTAFHTIKYDFKPASVDTSRMATVDVGSNNQVTVIVPNSELALNVRLLIFGLTESSGVPHTVYKGNQREYAKECLMIYDKETGAITIEKLNHNIQVKKTRTEVTNKPVQLPAQSVPMNMGHQGQVLGTNGSVPPPMAQLAQGPLSGPGGKLENSTMRVSSKTKVSTGSRRNNIIDFKPRNSPMQQSSPSRPVVTHRSPQSAPAWDANNAQQTLPSIPMITDDDDFGLRAALHNGGQANISGSSTGSSSGQPDLYGSSSSSHMGKQRQAHGKRQQIHQRSSPPVQQQPHYQQQQQPNYGRAYNGASNYAQQQQPQPQQQRHSPHQQPHQQQHQRHSPQQQQQRHSPQQLQQQRPTSYGHSNNMPMDLDSSREHDLASQSVAQAAAVLEQQIGGALSASSSSSESDSSDSDSGSDSDDSTEDDRSMKEQQEQQQQQQLQHQQLQLQHQQIQQPAPHHQRHQQQQSQQHMNQLPNLGLGSISPSYNNHHNHQQPQPQPQQQQMSGVYASNGGFPNDLLQNDLQLSSNSSDDDD.

Disordered stretches follow at residues 179–255 and 270–564; these read SGPG…MITD and QANI…DDDD. The span at 186–205 shows a compositional bias: polar residues; sequence ENSTMRVSSKTKVSTGSRRN. Serine 215 bears the Phosphoserine mark. Low complexity predominate over residues 274 to 283; the sequence is SGSSTGSSSG. Basic residues predominate over residues 297–309; sequence GKQRQAHGKRQQI. Low complexity-rich tracts occupy residues 315 to 329, 343 to 387, and 409 to 420; these read PPVQ…QQQP, QQQQ…QQRP, and ASQSVAQAAAVL. The span at 438–453 shows a compositional bias: acidic residues; the sequence is DSSDSDSGSDSDDSTE. Low complexity-rich tracts occupy residues 463–505, 523–533, and 546–564; these read EQQQ…NQLP, QQPQPQPQQQQ, and NDLL…DDDD.

Belongs to the EAF family.

The protein localises to the nucleus. Functionally, promotes transcriptional elongation by Su(Tpl)/ELL. Essential for development. The protein is Ell-associated factor Eaf of Drosophila pseudoobscura pseudoobscura (Fruit fly).